We begin with the raw amino-acid sequence, 792 residues long: Endonuclease MutS2 (792 aa).

344-351 provides a ligand contact to ATP; it reads GPNTGGKT. The Smr domain maps to 716 to 791; sequence IHLRGLHVEE…GLGVTVVYLE (76 aa).

This sequence belongs to the DNA mismatch repair MutS family. MutS2 subfamily. As to quaternary structure, homodimer. Binds to stalled ribosomes, contacting rRNA.

Functionally, endonuclease that is involved in the suppression of homologous recombination and thus may have a key role in the control of bacterial genetic diversity. In terms of biological role, acts as a ribosome collision sensor, splitting the ribosome into its 2 subunits. Detects stalled/collided 70S ribosomes which it binds and splits by an ATP-hydrolysis driven conformational change. Acts upstream of the ribosome quality control system (RQC), a ribosome-associated complex that mediates the extraction of incompletely synthesized nascent chains from stalled ribosomes and their subsequent degradation. Probably generates substrates for RQC. This chain is Endonuclease MutS2, found in Thermomicrobium roseum (strain ATCC 27502 / DSM 5159 / P-2).